We begin with the raw amino-acid sequence, 478 residues long: Ribulose bisphosphate carboxylase large chain (478 aa).

The propeptide occupies 1–2 (MS). 2 residues coordinate substrate: N123 and T173. Catalysis depends on K175, which acts as the Proton acceptor. Residue K177 coordinates substrate. Residues K201, D203, and E204 each coordinate Mg(2+). K201 bears the N6-carboxylysine mark. S208 carries the phosphoserine modification. The Proton acceptor role is filled by H294. Substrate-binding residues include R295 and H327. T330 bears the Phosphothreonine mark. A substrate-binding site is contributed by S379.

It belongs to the RuBisCO large chain family. Type I subfamily. In terms of assembly, heterohexadecamer of 8 large chains and 8 small chains; disulfide-linked. The disulfide link is formed within the large subunit homodimers. Mg(2+) serves as cofactor. Post-translationally, the disulfide bond which can form in the large chain dimeric partners within the hexadecamer appears to be associated with oxidative stress and protein turnover.

It localises to the plastid. It is found in the chloroplast. It carries out the reaction 2 (2R)-3-phosphoglycerate + 2 H(+) = D-ribulose 1,5-bisphosphate + CO2 + H2O. The enzyme catalyses D-ribulose 1,5-bisphosphate + O2 = 2-phosphoglycolate + (2R)-3-phosphoglycerate + 2 H(+). In terms of biological role, ruBisCO catalyzes two reactions: the carboxylation of D-ribulose 1,5-bisphosphate, the primary event in carbon dioxide fixation, as well as the oxidative fragmentation of the pentose substrate in the photorespiration process. Both reactions occur simultaneously and in competition at the same active site. The sequence is that of Ribulose bisphosphate carboxylase large chain from Lepidium virginicum (Virginia pepperweed).